Reading from the N-terminus, the 260-residue chain is Global transcriptional regulator CodY (260 aa).

The interval 1 to 159 (MPNLLEKTRK…SSTVVGIQLL (159 aa)) is GAF domain. Positions 207–226 (ASVIADRIGITRSVIVNALR) form a DNA-binding region, H-T-H motif.

This sequence belongs to the CodY family.

Its subcellular location is the cytoplasm. DNA-binding global transcriptional regulator which is involved in the adaptive response to starvation and acts by directly or indirectly controlling the expression of numerous genes in response to nutrient availability. During rapid exponential growth, CodY is highly active and represses genes whose products allow adaptation to nutrient depletion. The protein is Global transcriptional regulator CodY of Streptococcus pyogenes serotype M1.